Consider the following 445-residue polypeptide: Tubulin beta chain (445 aa).

Residues Q11, E69, S138, G142, T143, G144, N204, and N226 each contribute to the GTP site. E69 provides a ligand contact to Mg(2+).

The protein belongs to the tubulin family. In terms of assembly, dimer of alpha and beta chains. A typical microtubule is a hollow water-filled tube with an outer diameter of 25 nm and an inner diameter of 15 nM. Alpha-beta heterodimers associate head-to-tail to form protofilaments running lengthwise along the microtubule wall with the beta-tubulin subunit facing the microtubule plus end conferring a structural polarity. Microtubules usually have 13 protofilaments but different protofilament numbers can be found in some organisms and specialized cells. Requires Mg(2+) as cofactor.

The protein resides in the cytoplasm. It is found in the cytoskeleton. Tubulin is the major constituent of microtubules, a cylinder consisting of laterally associated linear protofilaments composed of alpha- and beta-tubulin heterodimers. Microtubules grow by the addition of GTP-tubulin dimers to the microtubule end, where a stabilizing cap forms. Below the cap, tubulin dimers are in GDP-bound state, owing to GTPase activity of alpha-tubulin. This Schizophyllum commune (Split gill fungus) protein is Tubulin beta chain (TUB-2).